The following is a 227-amino-acid chain: MTLSFFDQFLSPTLFGIPLIALALLLPWTLFPAPSSRWVNSRLLTLQSWFINRFTQQLLLPLNMGGHKWGPYILLVMVFLISINMLGLLPYTFTPTTQLSVNMALAVPVWLMTVIIGLRKNPTAALGHLLPEGTPVPLIPALILIETISLFIRPLALGVRLTANLTAGHLLIQLIATAAFVLLPLMPTVAILTTILLFLLTLLEVAVAMIQAYVFVLLLSLYLQENV.

The next 6 membrane-spanning stretches (helical) occupy residues 14 to 34 (LFGI…FPAP), 69 to 89 (WGPY…LGLL), 98 to 118 (QLSV…IIGL), 132 to 152 (EGTP…SLFI), 180 to 200 (FVLL…LFLL), and 202 to 222 (LLEV…LSLY).

The protein belongs to the ATPase A chain family. In terms of assembly, component of the ATP synthase complex composed at least of ATP5F1A/subunit alpha, ATP5F1B/subunit beta, ATP5MC1/subunit c (homooctomer), MT-ATP6/subunit a, MT-ATP8/subunit 8, ATP5ME/subunit e, ATP5MF/subunit f, ATP5MG/subunit g, ATP5MK/subunit k, ATP5MJ/subunit j, ATP5F1C/subunit gamma, ATP5F1D/subunit delta, ATP5F1E/subunit epsilon, ATP5PF/subunit F6, ATP5PB/subunit b, ATP5PD/subunit d, ATP5PO/subunit OSCP. ATP synthase complex consists of a soluble F(1) head domain (subunits alpha(3) and beta(3)) - the catalytic core - and a membrane F(0) domain - the membrane proton channel (subunits c, a, 8, e, f, g, k and j). These two domains are linked by a central stalk (subunits gamma, delta, and epsilon) rotating inside the F1 region and a stationary peripheral stalk (subunits F6, b, d, and OSCP). Interacts with DNAJC30; interaction is direct.

The protein localises to the mitochondrion inner membrane. It carries out the reaction H(+)(in) = H(+)(out). Its function is as follows. Subunit a, of the mitochondrial membrane ATP synthase complex (F(1)F(0) ATP synthase or Complex V) that produces ATP from ADP in the presence of a proton gradient across the membrane which is generated by electron transport complexes of the respiratory chain. ATP synthase complex consist of a soluble F(1) head domain - the catalytic core - and a membrane F(1) domain - the membrane proton channel. These two domains are linked by a central stalk rotating inside the F(1) region and a stationary peripheral stalk. During catalysis, ATP synthesis in the catalytic domain of F(1) is coupled via a rotary mechanism of the central stalk subunits to proton translocation. With the subunit c (ATP5MC1), forms the proton-conducting channel in the F(0) domain, that contains two crucial half-channels (inlet and outlet) that facilitate proton movement from the mitochondrial intermembrane space (IMS) into the matrix. Protons are taken up via the inlet half-channel and released through the outlet half-channel, following a Grotthuss mechanism. The protein is ATP synthase F(0) complex subunit a of Tetraodon nigroviridis (Spotted green pufferfish).